Reading from the N-terminus, the 562-residue chain is Putative transport protein PC1_1686 (562 aa).

6 helical membrane-spanning segments follow: residues 8 to 28 (LLNG…LCLG), 32 to 52 (LGPV…LLGQ), 66 to 86 (FMLF…SIFF), 93 to 113 (FMLA…LGKF), 116 to 136 (WGIG…PVLV), and 158 to 178 (HLSL…IFGA). 2 consecutive RCK C-terminal domains span residues 202–288 (LDAD…NFRD) and 292–373 (VFDR…RIGF). The next 5 membrane-spanning stretches (helical) occupy residues 383-403 (LLAF…TIQF), 406-426 (FTFG…LGFL), 447-467 (FGLM…INSS), 478-498 (SGLI…AYVL), and 537-557 (GTYA…VIIW).

This sequence belongs to the AAE transporter (TC 2.A.81) family. YbjL subfamily.

The protein resides in the cell membrane. The polypeptide is Putative transport protein PC1_1686 (Pectobacterium carotovorum subsp. carotovorum (strain PC1)).